A 556-amino-acid chain; its full sequence is 2-succinyl-5-enolpyruvyl-6-hydroxy-3-cyclohexene-1-carboxylate synthase (556 aa).

This sequence belongs to the TPP enzyme family. MenD subfamily. As to quaternary structure, homodimer. It depends on Mg(2+) as a cofactor. Mn(2+) is required as a cofactor. Requires thiamine diphosphate as cofactor.

The enzyme catalyses isochorismate + 2-oxoglutarate + H(+) = 5-enolpyruvoyl-6-hydroxy-2-succinyl-cyclohex-3-ene-1-carboxylate + CO2. Its pathway is quinol/quinone metabolism; 1,4-dihydroxy-2-naphthoate biosynthesis; 1,4-dihydroxy-2-naphthoate from chorismate: step 2/7. It functions in the pathway quinol/quinone metabolism; menaquinone biosynthesis. In terms of biological role, catalyzes the thiamine diphosphate-dependent decarboxylation of 2-oxoglutarate and the subsequent addition of the resulting succinic semialdehyde-thiamine pyrophosphate anion to isochorismate to yield 2-succinyl-5-enolpyruvyl-6-hydroxy-3-cyclohexene-1-carboxylate (SEPHCHC). This chain is 2-succinyl-5-enolpyruvyl-6-hydroxy-3-cyclohexene-1-carboxylate synthase, found in Saccharopolyspora erythraea (strain ATCC 11635 / DSM 40517 / JCM 4748 / NBRC 13426 / NCIMB 8594 / NRRL 2338).